Consider the following 217-residue polypeptide: uncharacterized protein (217 aa).

This is an uncharacterized protein from Methanocaldococcus jannaschii (strain ATCC 43067 / DSM 2661 / JAL-1 / JCM 10045 / NBRC 100440) (Methanococcus jannaschii).